We begin with the raw amino-acid sequence, 412 residues long: Cysteine desulfurase (412 aa).

The residue at position 231 (lysine 231) is an N6-(pyridoxal phosphate)lysine. The active-site Cysteine persulfide intermediate is the cysteine 369.

Belongs to the class-V pyridoxal-phosphate-dependent aminotransferase family. Csd subfamily. Homodimer. Interacts with SufE and the SufBCD complex composed of SufB, SufC and SufD. The interaction with SufE is required to mediate the direct transfer of the sulfur atom from the S-sulfanylcysteine. The cofactor is pyridoxal 5'-phosphate.

It is found in the cytoplasm. The enzyme catalyses (sulfur carrier)-H + L-cysteine = (sulfur carrier)-SH + L-alanine. It carries out the reaction L-selenocysteine + AH2 = hydrogenselenide + L-alanine + A + H(+). It functions in the pathway cofactor biosynthesis; iron-sulfur cluster biosynthesis. In terms of biological role, cysteine desulfurases mobilize the sulfur from L-cysteine to yield L-alanine, an essential step in sulfur metabolism for biosynthesis of a variety of sulfur-containing biomolecules. Component of the suf operon, which is activated and required under specific conditions such as oxidative stress and iron limitation. Acts as a potent selenocysteine lyase in vitro, that mobilizes selenium from L-selenocysteine. Selenocysteine lyase activity is however unsure in vivo. This chain is Cysteine desulfurase (sufS), found in Dickeya dadantii (strain 3937) (Erwinia chrysanthemi (strain 3937)).